The chain runs to 466 residues: Lipase 2 (466 aa).

The signal sequence occupies residues 1–16 (MKGLVFLLGLLPTIYA). C112 and C285 form a disulfide bridge. Residue S196 is the Charge relay system of the active site. 3 N-linked (GlcNAc...) asparagine glycosylation sites follow: N231, N319, and N331. Active-site charge relay system residues include D348 and H381. C364 and C409 are joined by a disulfide. N422 and N451 each carry an N-linked (GlcNAc...) asparagine glycan.

This sequence belongs to the AB hydrolase superfamily. Lipase family. Class Lip subfamily.

The protein resides in the secreted. It catalyses the reaction a triacylglycerol + H2O = a diacylglycerol + a fatty acid + H(+). Functionally, secreted lipase that is able to hydrolyze both the neutral triacylglycerols and the monopalmitate ester Tween 40, allowing the use of hydrolyzed products as carbon sources. Has broad lipolytic activity, which may be important for colonization and subsequent infection, therefore contributing to the persistence and virulence in human tissue. My be important for alimentary tract colonization, but not oral infection. Facilitates invasive disease via lipid-based suppression of the IL-17 response. Inhibits IL-17 production indirectly by suppressing IL-23 production by tissue-resident dendritic cells. This is Lipase 2 from Candida albicans (strain SC5314 / ATCC MYA-2876) (Yeast).